A 541-amino-acid polypeptide reads, in one-letter code: NAD(P)H-quinone oxidoreductase subunit 2 A, chloroplastic (541 aa).

Transmembrane regions (helical) follow at residues 24 to 44, 57 to 77, 99 to 119, 124 to 144, 149 to 169, 183 to 203, 227 to 247, 289 to 309, 326 to 346, 354 to 374, 385 to 405, 426 to 446, 449 to 469, and 515 to 535; these read LLLF…GLIL, IPWL…ALLF, IFQF…VEYI, MAIT…MFLC, FITI…LSGY, YLLM…WLYG, PGIS…LSPA, ILSP…AASA, WHLL…LIAI, MLAY…IVGD, YMLF…LFGL, ALSL…AGFF, LYLF…IGLL, and MIVC…IIAI.

This sequence belongs to the complex I subunit 2 family. As to quaternary structure, NDH is composed of at least 16 different subunits, 5 of which are encoded in the nucleus.

Its subcellular location is the plastid. The protein resides in the chloroplast thylakoid membrane. The enzyme catalyses a plastoquinone + NADH + (n+1) H(+)(in) = a plastoquinol + NAD(+) + n H(+)(out). It catalyses the reaction a plastoquinone + NADPH + (n+1) H(+)(in) = a plastoquinol + NADP(+) + n H(+)(out). In terms of biological role, NDH shuttles electrons from NAD(P)H:plastoquinone, via FMN and iron-sulfur (Fe-S) centers, to quinones in the photosynthetic chain and possibly in a chloroplast respiratory chain. The immediate electron acceptor for the enzyme in this species is believed to be plastoquinone. Couples the redox reaction to proton translocation, and thus conserves the redox energy in a proton gradient. The protein is NAD(P)H-quinone oxidoreductase subunit 2 A, chloroplastic of Coffea arabica (Arabian coffee).